The sequence spans 524 residues: Indoleacetamide hydrolase (524 aa).

Basic residues-rich tracts occupy residues 1–26 (MAKKTASKKKSVSRKVTKTSSKKATA) and 34–54 (AAKKSVKKAAPRKSATARRPK). The tract at residues 1–56 (MAKKTASKKKSVSRKVTKTSSKKATARKGAVAKAAKKSVKKAAPRKSATARRPKGP) is disordered. Active-site charge relay system residues include Lys-133 and Ser-208. Catalysis depends on Ser-232, which acts as the Acyl-ester intermediate.

The protein belongs to the amidase family.

It participates in plant hormone metabolism; auxin biosynthesis. In terms of biological role, hydrolyzes indole-3-acetamide (IAM) into indole-3-acetic acid (IAA). This Bradyrhizobium diazoefficiens (strain JCM 10833 / BCRC 13528 / IAM 13628 / NBRC 14792 / USDA 110) protein is Indoleacetamide hydrolase (bam).